The sequence spans 465 residues: Lactaldehyde dehydrogenase (465 aa).

Position 220 to 225 (220 to 225 (GSVEVG)) interacts with NAD(+). Active-site residues include glutamate 240 and cysteine 274.

It belongs to the aldehyde dehydrogenase family. Homotetramer.

It carries out the reaction (S)-lactaldehyde + NAD(+) + H2O = (S)-lactate + NADH + 2 H(+). The protein operates within cofactor biosynthesis; coenzyme F420 biosynthesis. In terms of biological role, involved in F420 biosynthesis through the oxidation of lactaldehyde to lactate. The protein is Lactaldehyde dehydrogenase of Methanococcus vannielii (strain ATCC 35089 / DSM 1224 / JCM 13029 / OCM 148 / SB).